We begin with the raw amino-acid sequence, 1305 residues long: Nonribosomal peptide synthetase hkm11 (1305 aa).

Residues 278–672 (TYGELDRWAK…GEIEHHLRPK (395 aa)) form an adenylation region. A Carrier domain is found at 788–864 (APTTEQEALL…SLASRMRQYN (77 aa)). Serine 825 is subject to O-(pantetheine 4'-phosphoryl)serine. Positions 926-1166 (KGQLDRHQLQ…LCLNITAVRV (241 aa)) are condensation.

This sequence belongs to the NRP synthetase family.

It catalyses the reaction hancockiamide D + (E)-cinnamate + ATP = hancockiamide A + AMP + diphosphate. The catalysed reaction is hancockiamide H + (E)-cinnamate + ATP = hancockiamide G + AMP + diphosphate. It functions in the pathway secondary metabolite biosynthesis. Its function is as follows. Nonribosomal peptide synthetase; part of the gene cluster that mediates the biosynthesis of hancockiamides, an unusual new family of N-cinnamoylated piperazines. The NRPS hkm10 and the NmrA-like reductase hkm9 are proposed to convert two molecules of L-Phe to the intermediary piperazine called xenocockiamide A. Xenocockiamide A is then converted to hancockiamide D via a series of hydroxylations and O-methylations. The tyrosinase hkm6 may catalyze an aromatic hydroxylation, then the 2-oxoglutarate-dependent Fe(II) dioxygenase hkm4 and the FAD-dependent phenol hydroxylase hkm7 may catalyze consecutive hydroxylations to install 2 more hydroxy groups, and the methyltransferase hkm8 probably catalyzes two methylations using 2 molecules of S-adenosyl-L-methionine (SAM). The NRPS hkm11 activates and transfers trans-cinnamate supplied by the PAL hkm12 to hancockiamide D and produces hancockiamide A. NRPS Hkm11 has the flexibility to tolerate the bulky hancockiamide G as a substrate and the absence of the acetyl-transferase hkm3 opens up the opportunity for hkm11 to introduce a second N-cinnamoyl moiety. The cytochrome P450 monooxygenase hkm5 catalyzes the methylenedioxy bridge formation, converting hancockiamide A into hancockiamide G. Hkm5 can also convert hancockiamide B into hancockiamide C, and hancockiamide D into hancockiamide H. The N-acetyltransferase hkm3 finally transfers an acetyl group to 1-N of piperazine, converting hancockiamide A into hancockiamide B and hancockiamide G into hancockiamide C. The polypeptide is Nonribosomal peptide synthetase hkm11 (Aspergillus hancockii).